Consider the following 328-residue polypeptide: Delta(3,5)-Delta(2,4)-dienoyl-CoA isomerase, mitochondrial (328 aa).

A mitochondrion-targeting transit peptide spans 1–33 (MAAGIVASRRLRDLLTRRLTGSNYPGLSISLRL). Residues 116–120 (AGIDL) and G174 contribute to the substrate site. The residue at position 231 (K231) is an N6-succinyllysine. S268 carries the post-translational modification Phosphoserine. Positions 326–328 (SKL) match the Microbody targeting signal motif. N6-acetyllysine is present on K327.

It belongs to the enoyl-CoA hydratase/isomerase family. Homohexamer.

The protein localises to the mitochondrion. Its subcellular location is the peroxisome. It carries out the reaction (3E,5Z)-octadienoyl-CoA = (2E,4E)-octadienoyl-CoA. It catalyses the reaction (3E,5Z,8Z,11Z,14Z)-eicosapentaenoyl-CoA = (2E,4E,8Z,11Z,14Z)-eicosapentaenoyl-CoA. The protein operates within lipid metabolism; fatty acid beta-oxidation. In terms of biological role, isomerization of 3-trans,5-cis-dienoyl-CoA to 2-trans,4-trans-dienoyl-CoA. The polypeptide is Delta(3,5)-Delta(2,4)-dienoyl-CoA isomerase, mitochondrial (Homo sapiens (Human)).